The chain runs to 126 residues: Holo-[acyl-carrier-protein] synthase (126 aa).

2 residues coordinate Mg(2+): Asp-9 and Glu-58.

The protein belongs to the P-Pant transferase superfamily. AcpS family. Mg(2+) is required as a cofactor.

The protein localises to the cytoplasm. It catalyses the reaction apo-[ACP] + CoA = holo-[ACP] + adenosine 3',5'-bisphosphate + H(+). In terms of biological role, transfers the 4'-phosphopantetheine moiety from coenzyme A to a Ser of acyl-carrier-protein. This is Holo-[acyl-carrier-protein] synthase from Cronobacter sakazakii (strain ATCC BAA-894) (Enterobacter sakazakii).